Consider the following 84-residue polypeptide: Acyl carrier protein (84 aa).

The Carrier domain occupies 4 to 79 (NEIFEKVQDI…EVVDFIKSKL (76 aa)). At serine 39 the chain carries O-(pantetheine 4'-phosphoryl)serine.

This sequence belongs to the acyl carrier protein (ACP) family. In terms of processing, 4'-phosphopantetheine is transferred from CoA to a specific serine of apo-ACP by AcpS. This modification is essential for activity because fatty acids are bound in thioester linkage to the sulfhydryl of the prosthetic group.

It is found in the plastid. Its subcellular location is the chloroplast. It functions in the pathway lipid metabolism; fatty acid biosynthesis. Its function is as follows. Carrier of the growing fatty acid chain in fatty acid biosynthesis. The sequence is that of Acyl carrier protein from Porphyra purpurea (Red seaweed).